Consider the following 153-residue polypeptide: Large ribosomal subunit protein uL13 (153 aa).

Positions 134 to 153 are disordered; that stretch reads EAQQPQALDVGSLNRKNVSA.

It belongs to the universal ribosomal protein uL13 family. As to quaternary structure, part of the 50S ribosomal subunit.

In terms of biological role, this protein is one of the early assembly proteins of the 50S ribosomal subunit, although it is not seen to bind rRNA by itself. It is important during the early stages of 50S assembly. The protein is Large ribosomal subunit protein uL13 of Methylorubrum extorquens (strain CM4 / NCIMB 13688) (Methylobacterium extorquens).